We begin with the raw amino-acid sequence, 244 residues long: Ribonuclease 3 (244 aa).

An RNase III domain is found at 5–136 (LAELERAIGI…LVGAIYLDQG (132 aa)). Mg(2+) is bound at residue Glu-49. Asp-53 is an active-site residue. Mg(2+)-binding residues include Asp-122 and Glu-125. Glu-125 is an active-site residue. Positions 161-229 (DPTTRLQELM…ARKALAAWDK (69 aa)) constitute a DRBM domain.

This sequence belongs to the ribonuclease III family. In terms of assembly, homodimer. Mg(2+) serves as cofactor.

Its subcellular location is the cytoplasm. It carries out the reaction Endonucleolytic cleavage to 5'-phosphomonoester.. Functionally, digests double-stranded RNA. Involved in the processing of primary rRNA transcript to yield the immediate precursors to the large and small rRNAs (23S and 16S). Processes some mRNAs, and tRNAs when they are encoded in the rRNA operon. Processes pre-crRNA and tracrRNA of type II CRISPR loci if present in the organism. This Chloroflexus aurantiacus (strain ATCC 29364 / DSM 637 / Y-400-fl) protein is Ribonuclease 3.